The following is a 131-amino-acid chain: Small ribosomal subunit protein uS12 (131 aa).

The residue at position 89 (aspartate 89) is a 3-methylthioaspartic acid. Positions 106-131 are disordered; it reads GVDGRKQGRSKYGAKKAKVAKTASAK. Positions 112 to 124 are enriched in basic residues; it reads QGRSKYGAKKAKV.

It belongs to the universal ribosomal protein uS12 family. Part of the 30S ribosomal subunit. Contacts proteins S8 and S17. May interact with IF1 in the 30S initiation complex.

In terms of biological role, with S4 and S5 plays an important role in translational accuracy. Functionally, interacts with and stabilizes bases of the 16S rRNA that are involved in tRNA selection in the A site and with the mRNA backbone. Located at the interface of the 30S and 50S subunits, it traverses the body of the 30S subunit contacting proteins on the other side and probably holding the rRNA structure together. The combined cluster of proteins S8, S12 and S17 appears to hold together the shoulder and platform of the 30S subunit. The sequence is that of Small ribosomal subunit protein uS12 from Endomicrobium trichonymphae.